The chain runs to 103 residues: Defensin-like protein 290 (103 aa).

Positions 1 to 29 (MTALRRTISIIFVFYLSCTLFVNIFGVQA) are cleaved as a signal peptide. Cystine bridges form between C33–C50, C39–C55, C43–C57, C72–C92, C78–C98, and C84–C100.

The protein belongs to the DEFL family.

The protein localises to the secreted. This Arabidopsis thaliana (Mouse-ear cress) protein is Defensin-like protein 290.